A 396-amino-acid chain; its full sequence is MLHRCSRVLSQFLGRGNSKMLREAYSTSLHCVQAQEGMSVSPDVIAKIEEGYAKLQAAPECHSLLKKYLTKEVVDQLKDKKTKLGANLLDVIQSGVANLDSGVGVYAPDAEAYTLFKPLFDPLIQDYHNGFAPDAKQPNTDLGEGKTSALVDLDPEGKFINSTRIRCGRSLQGYPFNPCLSEANYLEMESKVKAIFDNITDPELAGKYFPLDGMTKEIQDQLIKDHFLFKEGDRFLQAANACRYWPKGRGIFHNNQKTFLIWCNEEDHLRIISMQEGGNVGQVLERLIKGVKTIEKQAPFSRDDRLGWLTFCPSNLGTTVRASVHIRLPKISAKPDFKSICDGLKLQIRGIHGEHSESEGGVYDISNKARLGLTEFEAVKQMYDGIAHLIALEKAA.

The region spanning 47-129 is the Phosphagen kinase N-terminal domain; the sequence is KIEEGYAKLQ…FDPLIQDYHN (83 aa). Residue 102–106 participates in substrate binding; the sequence is GVGVY. The region spanning 159–396 is the Phosphagen kinase C-terminal domain; the sequence is FINSTRIRCG…AHLIALEKAA (238 aa). Residues 162–166 and His226 each bind ATP; that span reads STRIR. Glu266 lines the substrate pocket. ATP is bound at residue Arg270. Cys312 provides a ligand contact to substrate. ATP contacts are provided by residues 321 to 325, 349 to 354, and Asp364; these read RASVH and RGIHGE. Substrate is bound at residue Glu354.

This sequence belongs to the ATP:guanido phosphotransferase family.

It catalyses the reaction L-arginine + ATP = N(omega)-phospho-L-arginine + ADP + H(+). The sequence is that of Probable arginine kinase F46H5.3 from Caenorhabditis elegans.